The sequence spans 174 residues: MNSLLIMGYTSFDLGIFNEKDIKVSIIKKTIRRKLINFLEEGLRWVIFTGNLGFEYWALEVAKELQTDYEFQIGTIFPFETHGQNWNENNQIKLASFKQVDFVKYAFEAYENPGQFRQYNEFLLENTEGSFVFYDEENETKLKNMVEKMKQSSNYEVYLLNFEDLQEIFEEMND.

It belongs to the UPF0398 family.

This chain is UPF0398 protein LACR_0544, found in Lactococcus lactis subsp. cremoris (strain SK11).